A 210-amino-acid chain; its full sequence is Orotate phosphoribosyltransferase (210 aa).

5-phospho-alpha-D-ribose 1-diphosphate-binding positions include R96, K100, H102, and 122–130 (EDLISTGGS). Residue S126 coordinates orotate.

This sequence belongs to the purine/pyrimidine phosphoribosyltransferase family. PyrE subfamily. As to quaternary structure, homodimer. It depends on Mg(2+) as a cofactor.

It carries out the reaction orotidine 5'-phosphate + diphosphate = orotate + 5-phospho-alpha-D-ribose 1-diphosphate. Its pathway is pyrimidine metabolism; UMP biosynthesis via de novo pathway; UMP from orotate: step 1/2. Catalyzes the transfer of a ribosyl phosphate group from 5-phosphoribose 1-diphosphate to orotate, leading to the formation of orotidine monophosphate (OMP). This chain is Orotate phosphoribosyltransferase, found in Streptococcus pneumoniae serotype 4 (strain ATCC BAA-334 / TIGR4).